Reading from the N-terminus, the 189-residue chain is Elongation factor P (189 aa).

Belongs to the elongation factor P family.

The protein resides in the cytoplasm. Its pathway is protein biosynthesis; polypeptide chain elongation. Functionally, involved in peptide bond synthesis. Stimulates efficient translation and peptide-bond synthesis on native or reconstituted 70S ribosomes in vitro. Probably functions indirectly by altering the affinity of the ribosome for aminoacyl-tRNA, thus increasing their reactivity as acceptors for peptidyl transferase. This chain is Elongation factor P, found in Sinorhizobium fredii (strain NBRC 101917 / NGR234).